The following is a 913-amino-acid chain: Protein translocase subunit SecA (913 aa).

Residues Gln87, 105-109, and Asp512 each bind ATP; that span reads GEGKT. Zn(2+)-binding residues include Cys897, Cys899, Cys908, and His909.

Belongs to the SecA family. Monomer and homodimer. Part of the essential Sec protein translocation apparatus which comprises SecA, SecYEG and auxiliary proteins SecDF-YajC and YidC. The cofactor is Zn(2+).

It is found in the cell inner membrane. Its subcellular location is the cytoplasm. The enzyme catalyses ATP + H2O + cellular proteinSide 1 = ADP + phosphate + cellular proteinSide 2.. Its function is as follows. Part of the Sec protein translocase complex. Interacts with the SecYEG preprotein conducting channel. Has a central role in coupling the hydrolysis of ATP to the transfer of proteins into and across the cell membrane, serving both as a receptor for the preprotein-SecB complex and as an ATP-driven molecular motor driving the stepwise translocation of polypeptide chains across the membrane. The polypeptide is Protein translocase subunit SecA (Pseudomonas fluorescens (strain ATCC BAA-477 / NRRL B-23932 / Pf-5)).